The sequence spans 193 residues: NADH-quinone oxidoreductase subunit B (193 aa).

Cys-72, Cys-73, Cys-137, and Cys-167 together coordinate [4Fe-4S] cluster.

This sequence belongs to the complex I 20 kDa subunit family. As to quaternary structure, NDH-1 is composed of 14 different subunits. Subunits NuoB, C, D, E, F, and G constitute the peripheral sector of the complex. The cofactor is [4Fe-4S] cluster.

The protein resides in the cell inner membrane. The catalysed reaction is a quinone + NADH + 5 H(+)(in) = a quinol + NAD(+) + 4 H(+)(out). NDH-1 shuttles electrons from NADH, via FMN and iron-sulfur (Fe-S) centers, to quinones in the respiratory chain. Couples the redox reaction to proton translocation (for every two electrons transferred, four hydrogen ions are translocated across the cytoplasmic membrane), and thus conserves the redox energy in a proton gradient. This Brucella abortus (strain S19) protein is NADH-quinone oxidoreductase subunit B.